The chain runs to 157 residues: SsrA-binding protein (157 aa).

A disordered region spans residues 130–157 (HDKRQDMAKKDSQRRIQKELGQRQKGME). The segment covering 132–157 (KRQDMAKKDSQRRIQKELGQRQKGME) has biased composition (basic and acidic residues).

It belongs to the SmpB family.

The protein localises to the cytoplasm. Required for rescue of stalled ribosomes mediated by trans-translation. Binds to transfer-messenger RNA (tmRNA), required for stable association of tmRNA with ribosomes. tmRNA and SmpB together mimic tRNA shape, replacing the anticodon stem-loop with SmpB. tmRNA is encoded by the ssrA gene; the 2 termini fold to resemble tRNA(Ala) and it encodes a 'tag peptide', a short internal open reading frame. During trans-translation Ala-aminoacylated tmRNA acts like a tRNA, entering the A-site of stalled ribosomes, displacing the stalled mRNA. The ribosome then switches to translate the ORF on the tmRNA; the nascent peptide is terminated with the 'tag peptide' encoded by the tmRNA and targeted for degradation. The ribosome is freed to recommence translation, which seems to be the essential function of trans-translation. This is SsrA-binding protein from Alkaliphilus metalliredigens (strain QYMF).